The sequence spans 275 residues: Elongation factor Ts (275 aa).

The involved in Mg(2+) ion dislocation from EF-Tu stretch occupies residues 76–79 (TDFV).

Belongs to the EF-Ts family.

It is found in the cytoplasm. Associates with the EF-Tu.GDP complex and induces the exchange of GDP to GTP. It remains bound to the aminoacyl-tRNA.EF-Tu.GTP complex up to the GTP hydrolysis stage on the ribosome. This is Elongation factor Ts from Salinispora tropica (strain ATCC BAA-916 / DSM 44818 / JCM 13857 / NBRC 105044 / CNB-440).